The following is a 101-amino-acid chain: Omega-scoloptoxin(10)-Ssd1b (101 aa).

A signal peptide spans 1 to 23; it reads MNKLTIIFFTILLLTYIIVEKEA.

Contains 3 disulfide bonds. Expressed by the venom gland.

It is found in the secreted. Voltage-gated calcium channel inhibitor. The polypeptide is Omega-scoloptoxin(10)-Ssd1b (Scolopendra dehaani (Thai centipede)).